Reading from the N-terminus, the 360-residue chain is Protein phosphatase 1 regulatory subunit 7 (360 aa).

The segment at 1 to 65 (MAAERGAGQQ…DEDPEEGQEL (65 aa)) is disordered. Alanine 2 is subject to N-acetylalanine. Serine 12, serine 24, serine 27, serine 44, and serine 47 each carry phosphoserine. Over residues 17 to 34 (EVDRRVESEESGDEEGKK) the composition is skewed to basic and acidic residues. Positions 53–63 (ERGDEDPEEGQ) are enriched in acidic residues. LRR repeat units lie at residues 77–98 (DAED…EVLK), 99–120 (KVKT…EGLQ), 121–142 (SLRE…DALT), 143–164 (ELEV…DKLT), 165–186 (RLKK…SSLH), 187–208 (QLQM…DTLT), 209–230 (NLES…DALT), 231–252 (NLTV…QSLV), 253–274 (NLRE…DNNN), 275–296 (KLTM…SHLT), and 297–318 (ELQE…DELK). A Phosphoserine modification is found at serine 322. The LRRCT domain occupies 331–360 (NPLQRDPQYRRKIMLALPSVRQIDATFVRF).

This sequence belongs to the SDS22 family. In terms of assembly, interacts with PPP1CA, PPP1CB and PPP1CC/PPP1G. Interacts with PPP1CC isoform 2 in motile caudal epididymal spermatozoa. In terms of tissue distribution, expressed in epididymal spermatozoa including the principal piece of the flagellum and the head-neck junction.

The protein resides in the nucleus. In terms of biological role, regulatory subunit of protein phosphatase 1. Inactivates the PPP1CC isoform 2 during epididymal sperm maturation. The polypeptide is Protein phosphatase 1 regulatory subunit 7 (PPP1R7) (Bos taurus (Bovine)).